Consider the following 279-residue polypeptide: MDNKNSVIKFENVSFSYNSKKQVLKNVSYEIYEKEYVCIVGHNGSGKSTMSKLLTGILKPLAGTIYLFGYAISRDNIKFLRDNVGIIFQNPDNQFIGITAEDDIAFGLENRKIPRGEIKRIIDSVADKVGIKDILKFEPHKLSGGQKQRVAIASVLAINPSIILFDESTSMLDPKGKKDIKSFMLQLRNQGKTVISITHDMEEVVNCDRVLVMDHGNLIKQGRPDEIFKDKQFLRDINLDVPFSLDLAMQLNELDEKINSTLRYNELIDNICSRVDQKD.

The ABC transporter domain maps to 8 to 240; sequence IKFENVSFSY…KQFLRDINLD (233 aa). 41–48 is an ATP binding site; the sequence is GHNGSGKS.

This sequence belongs to the ABC transporter superfamily. Energy-coupling factor EcfA family. Forms a stable energy-coupling factor (ECF) transporter complex composed of 2 membrane-embedded substrate-binding proteins (S component), 2 ATP-binding proteins (A component) and 2 transmembrane proteins (T component).

The protein resides in the cell membrane. ATP-binding (A) component of a common energy-coupling factor (ECF) ABC-transporter complex. Unlike classic ABC transporters this ECF transporter provides the energy necessary to transport a number of different substrates. This chain is Energy-coupling factor transporter ATP-binding protein EcfA1, found in Mycoplasmoides gallisepticum (strain R(low / passage 15 / clone 2)) (Mycoplasma gallisepticum).